A 509-amino-acid polypeptide reads, in one-letter code: NAD-dependent histone deacetylase SIR2 (509 aa).

The tract at residues 1-35 (MIISRGSHVDEEPVAKKPRISVGEMTDDTTDDGLN) is disordered. Positions 25-35 (MTDDTTDDGLN) are enriched in acidic residues. The Deacetylase sirtuin-type domain occupies 185–476 (RLSNFYTIDH…TVVAQKCEWD (292 aa)). NAD(+)-binding positions include 210 to 229 (GAGV…EGFY) and 292 to 295 (QNID). Catalysis depends on His-312, which acts as the Proton acceptor. Zn(2+)-binding residues include Cys-320, Cys-323, Cys-344, and Cys-347. Residues 420–422 (GTS), 445–447 (NKD), and Cys-462 each bind NAD(+).

The protein belongs to the sirtuin family. Class I subfamily. It depends on Zn(2+) as a cofactor.

The protein resides in the nucleus. It catalyses the reaction N(6)-acetyl-L-lysyl-[protein] + NAD(+) + H2O = 2''-O-acetyl-ADP-D-ribose + nicotinamide + L-lysyl-[protein]. NAD-dependent deacetylase. Heterochromatin component that silences transcription at silent mating loci, telomeres and the ribosomal DNA, and that also suppresses recombination in the rDNA and extends replicative life span. It acts as a NAD-dependent histone deacetylase, which deacetylates 'Lys-9' and 'Lys-14' of Histone H3 and 'Lys-16' of Histone H4. This Candida glabrata (strain ATCC 2001 / BCRC 20586 / JCM 3761 / NBRC 0622 / NRRL Y-65 / CBS 138) (Yeast) protein is NAD-dependent histone deacetylase SIR2 (SIR2).